The chain runs to 414 residues: Protein ABHD18 (414 aa).

The first 24 residues, 1–24 (MGVSKLDILYRRLLLTKLFIRGWG), serve as a signal peptide directing secretion. 2 N-linked (GlcNAc...) asparagine glycosylation sites follow: Asn282 and Asn307.

The protein belongs to the AB hydrolase superfamily.

The protein resides in the secreted. The polypeptide is Protein ABHD18 (Homo sapiens (Human)).